The chain runs to 226 residues: EEF1A lysine methyltransferase 1 (226 aa).

Serine 2 is subject to N-acetylserine. Serine 2 carries the phosphoserine modification.

This sequence belongs to the class I-like SAM-binding methyltransferase superfamily. EFM5 family.

The protein resides in the cytoplasm. It catalyses the reaction L-lysyl-[protein] + 3 S-adenosyl-L-methionine = N(6),N(6),N(6)-trimethyl-L-lysyl-[protein] + 3 S-adenosyl-L-homocysteine + 3 H(+). In terms of biological role, protein-lysine methyltransferase that selectively catalyzes the trimethylation of EEF1A at 'Lys-79'. This Bos taurus (Bovine) protein is EEF1A lysine methyltransferase 1.